The sequence spans 231 residues: Ureidoacrylate amidohydrolase RutB (231 aa).

Asp-25 functions as the Proton acceptor in the catalytic mechanism. Lys-134 is a catalytic residue. The active-site Nucleophile is the Cys-167.

This sequence belongs to the isochorismatase family. RutB subfamily.

It carries out the reaction (Z)-3-ureidoacrylate + H2O + H(+) = (Z)-3-aminoacrylate + NH4(+) + CO2. The catalysed reaction is (Z)-3-ureidoacrylate + H2O = (Z)-3-aminoacrylate + carbamate + H(+). The enzyme catalyses (Z)-2-methylureidoacrylate + H2O + H(+) = (Z)-2-methylaminoacrylate + NH4(+) + CO2. Its function is as follows. Hydrolyzes ureidoacrylate to form aminoacrylate and carbamate. The carbamate hydrolyzes spontaneously, thereby releasing one of the nitrogen atoms of the pyrimidine ring as ammonia and one of its carbon atoms as CO2. The chain is Ureidoacrylate amidohydrolase RutB from Escherichia coli O18:K1:H7 (strain IHE3034 / ExPEC).